A 496-amino-acid polypeptide reads, in one-letter code: Glutamyl-tRNA(Gln) amidotransferase subunit A (496 aa).

Catalysis depends on charge relay system residues Lys-75 and Ser-150. Ser-174 serves as the catalytic Acyl-ester intermediate.

This sequence belongs to the amidase family. GatA subfamily. As to quaternary structure, heterotrimer of A, B and C subunits.

It catalyses the reaction L-glutamyl-tRNA(Gln) + L-glutamine + ATP + H2O = L-glutaminyl-tRNA(Gln) + L-glutamate + ADP + phosphate + H(+). Its function is as follows. Allows the formation of correctly charged Gln-tRNA(Gln) through the transamidation of misacylated Glu-tRNA(Gln) in organisms which lack glutaminyl-tRNA synthetase. The reaction takes place in the presence of glutamine and ATP through an activated gamma-phospho-Glu-tRNA(Gln). This is Glutamyl-tRNA(Gln) amidotransferase subunit A from Burkholderia lata (strain ATCC 17760 / DSM 23089 / LMG 22485 / NCIMB 9086 / R18194 / 383).